The sequence spans 146 residues: FAD synthase (146 aa).

ATP contacts are provided by residues 9-10 (TF), 14-17 (HPGH), and Asp-92.

This sequence belongs to the archaeal FAD synthase family. In terms of assembly, homodimer. Requires a divalent metal cation as cofactor.

The enzyme catalyses FMN + ATP + H(+) = FAD + diphosphate. Its pathway is cofactor biosynthesis; FAD biosynthesis; FAD from FMN: step 1/1. In terms of biological role, catalyzes the transfer of the AMP portion of ATP to flavin mononucleotide (FMN) to produce flavin adenine dinucleotide (FAD) coenzyme. This Halobacterium salinarum (strain ATCC 29341 / DSM 671 / R1) protein is FAD synthase.